The sequence spans 2278 residues: Protein Ycf2 (2278 aa).

1632 to 1639 contacts ATP; the sequence is GSIGTGRS.

Belongs to the Ycf2 family.

Its subcellular location is the plastid. It is found in the chloroplast stroma. Functionally, probable ATPase of unknown function. Its presence in a non-photosynthetic plant (Epifagus virginiana) and experiments in tobacco indicate that it has an essential function which is probably not related to photosynthesis. This chain is Protein Ycf2, found in Solanum tuberosum (Potato).